The following is a 105-amino-acid chain: Nucleoid-associated protein PTH_0052 (105 aa).

Belongs to the YbaB/EbfC family. As to quaternary structure, homodimer.

The protein localises to the cytoplasm. It is found in the nucleoid. Functionally, binds to DNA and alters its conformation. May be involved in regulation of gene expression, nucleoid organization and DNA protection. The polypeptide is Nucleoid-associated protein PTH_0052 (Pelotomaculum thermopropionicum (strain DSM 13744 / JCM 10971 / SI)).